The chain runs to 556 residues: Formate--tetrahydrofolate ligase (556 aa).

Residue threonine 65 to serine 72 coordinates ATP.

Belongs to the formate--tetrahydrofolate ligase family.

It carries out the reaction (6S)-5,6,7,8-tetrahydrofolate + formate + ATP = (6R)-10-formyltetrahydrofolate + ADP + phosphate. The protein operates within one-carbon metabolism; tetrahydrofolate interconversion. In Streptococcus suis (strain 98HAH33), this protein is Formate--tetrahydrofolate ligase.